A 276-amino-acid polypeptide reads, in one-letter code: Anthranilate synthase beta subunit 1, chloroplastic (276 aa).

The transit peptide at methionine 1–lysine 50 directs the protein to the chloroplast. Residues proline 74–glutamate 273 enclose the Glutamine amidotransferase type-1 domain. Cysteine 152 serves as the catalytic Nucleophile. Residues histidine 247 and glutamate 249 contribute to the active site.

In terms of assembly, heterotetramer consisting of two non-identical subunits: a beta subunit and a large alpha subunit. As to expression, expressed in the central cylinder of mature primary root zones, including pericycle and early lateral root primordia, and vasculature of cotyledons.

The protein resides in the plastid. The protein localises to the chloroplast. It carries out the reaction chorismate + L-glutamine = anthranilate + pyruvate + L-glutamate + H(+). The protein operates within amino-acid biosynthesis; L-tryptophan biosynthesis; L-tryptophan from chorismate: step 1/5. Part of a heterotetrameric complex that catalyzes the two-step biosynthesis of anthranilate, an intermediate in the biosynthesis of L-tryptophan. In the first step, the glutamine-binding beta subunit of anthranilate synthase (AS) provides the glutamine amidotransferase activity which generates ammonia as a substrate that, along with chorismate, is used in the second step, catalyzed by the large alpha subunit of AS to produce anthranilate. Plays an important regulatory role in auxin production via the tryptophan-dependent biosynthetic pathway. The polypeptide is Anthranilate synthase beta subunit 1, chloroplastic (ASB1) (Arabidopsis thaliana (Mouse-ear cress)).